A 116-amino-acid chain; its full sequence is Ferredoxin-like protein in nif region (116 aa).

The 28-residue stretch at 2–29 (AYTITSQCISCKLCSSVCPTGAIKIAEN) folds into the 4Fe-4S ferredoxin-type domain. The iron-sulfur cluster site is built by Cys-9, Cys-12, Cys-15, and Cys-19.

The protein is Ferredoxin-like protein in nif region (fdxN) of Nostoc sp. (strain PCC 7120 / SAG 25.82 / UTEX 2576).